Reading from the N-terminus, the 563-residue chain is Developmental regulatory protein wetA (563 aa).

2 stretches are compositionally biased toward polar residues: residues Glu-54–Ser-69 and His-160–Gln-175. 6 disordered regions span residues Glu-54–Pro-81, Ala-112–Lys-176, Ser-272–Gln-318, Pro-334–Thr-356, Pro-430–Gly-494, and Gly-516–Arg-538. A compositionally biased stretch (low complexity) spans Ser-272–Asp-305. Over residues Pro-430–Leu-441 the composition is skewed to polar residues.

Belongs to the wetA family.

Its function is as follows. BrlA, abaA and wetA are pivotal regulators of conidiophore development and conidium maturation. They act individually and together to regulate their own expression and that of numerous other sporulation-specific genes. The protein is Developmental regulatory protein wetA of Aspergillus oryzae (strain ATCC 42149 / RIB 40) (Yellow koji mold).